The primary structure comprises 171 residues: S-ribosylhomocysteine lyase (171 aa).

The Fe cation site is built by H54, H58, and C128.

The protein belongs to the LuxS family. In terms of assembly, homodimer. The cofactor is Fe cation.

It carries out the reaction S-(5-deoxy-D-ribos-5-yl)-L-homocysteine = (S)-4,5-dihydroxypentane-2,3-dione + L-homocysteine. Involved in the synthesis of autoinducer 2 (AI-2) which is secreted by bacteria and is used to communicate both the cell density and the metabolic potential of the environment. The regulation of gene expression in response to changes in cell density is called quorum sensing. Catalyzes the transformation of S-ribosylhomocysteine (RHC) to homocysteine (HC) and 4,5-dihydroxy-2,3-pentadione (DPD). In Escherichia coli O157:H7, this protein is S-ribosylhomocysteine lyase.